The sequence spans 585 residues: Arginine--tRNA ligase (585 aa).

Residues 131 to 141 (ANPTGPMHVGH) carry the 'HIGH' region motif.

The protein belongs to the class-I aminoacyl-tRNA synthetase family. Monomer.

It is found in the cytoplasm. The enzyme catalyses tRNA(Arg) + L-arginine + ATP = L-arginyl-tRNA(Arg) + AMP + diphosphate. This is Arginine--tRNA ligase from Brucella melitensis biotype 1 (strain ATCC 23456 / CCUG 17765 / NCTC 10094 / 16M).